The primary structure comprises 677 residues: MERVHLTAWLALFLIVVANATPTPARTPTGCPADCTCSLSQHTHKPLYHLKCNSTRGLRLTEKTFQSTVPVHSIDLSHLNLTRLSHLLDKLPELTSADLSHNQLKDLGHLGKGLKRLNLKHNQLTSDKLRKLPQHLQVLNLQHNNITHLPLELTHMHQLHQLELSHNAINCSCQTLEVRNWLVERIVYMEHPVVCSYPLEFRGRSWLQLKQDEICKKEKYQWFDTEENELMMGDQPAAVSAEREDEEELGKDFLPIVGNPAATAKKVRSPQIPLPSDQVEGSGDLSETNMELKLPEETVAEPEAAESQLVDAAASPSVLEEHIVKDEDEDDEGSGSGGGLLIIPDPSKVKITSEDDIDSDGKPEESDVRPLENPENSENPDTVFSNKIGIYEGDQEEKKPVEEDNIVPVVMTNLDTGLESDVVTDGPLDSSKESEDILTAKIGKPKDDSSAIYYLLAVIGLIVVGLVLFVAIKRCKYDSNAAARDAEAQRQTELLDMDKKQLGKPLHKNGHGNGQEHSPLIGEKTKLDEAQIVKKPYENGEAKDGAGQQPLLNGNGSANGGTKEAPETGEPAAHEYYPITPRYPTPQSPRASKYAQQQQLAEQNNNEPDGAYLPSSPKSGRYSPVYSPETGRVKIKLTETPKPKTPMLVTRSKSNAGDIITTPVRPIEPTHQVINGH.

An N-terminal signal peptide occupies residues Met-1 to Ala-20. Residues Thr-21 to Ala-451 are Extracellular-facing. N-linked (GlcNAc...) asparagine glycans are attached at residues Asn-53 and Asn-80. 4 LRR repeats span residues Leu-91–Arg-116, Asn-118–Pro-133, Gln-134–Met-156, and Gln-158–Val-183. 2 N-linked (GlcNAc...) asparagine glycosylation sites follow: Asn-145 and Asn-170. Residues Glu-184–Lys-216 enclose the LRRCT domain. Disordered stretches follow at residues Ala-264–Leu-285, Thr-298–Ser-317, and Lys-325–Ser-385. Basic and acidic residues predominate over residues Ser-347 to Glu-372. The segment covering Pro-374–Ser-385 has biased composition (polar residues). A helical membrane pass occupies residues Ile-452 to Ile-472. At Lys-473–His-677 the chain is on the cytoplasmic side. Disordered stretches follow at residues Leu-502–Glu-523 and Asn-539–His-677. The span at Ala-595–Glu-607 shows a compositional bias: low complexity.

In terms of assembly, interacts with dome; the interaction promotes internalization of dome and its subsequent lysosomal degradation. As to expression, in adult intestine, expressed in both small progenitor cells and large nuclei enterocytes (at protein level). During embryogenesis, restricted to the developing trachea.

It localises to the cell membrane. Functionally, plays a role in negative regulation of the JAK/STAT pathway by binding to the receptor dome and promoting its internalization for subsequent lysosomal degradation, thereby reducing JAK/STAT signaling. This Drosophila melanogaster (Fruit fly) protein is Protein windpipe.